The primary structure comprises 516 residues: Glycosyl hydrolase family 109 protein 4 (516 aa).

The N-terminal stretch at 1 to 18 is a signal peptide; that stretch reads MKKIKLLLVAGACVVLSA. Cys-19 carries N-palmitoyl cysteine lipidation. A lipid anchor (S-diacylglycerol cysteine) is attached at Cys-19. Residues 76-77, Asp-98, 146-149, 166-167, and Asn-195 each bind NAD(+); these read MR, WLHH, and EV. Residues Tyr-224, Arg-247, 259–262, and Tyr-337 contribute to the substrate site; that span reads YATH. Tyr-259 lines the NAD(+) pocket.

Belongs to the Gfo/Idh/MocA family. Glycosyl hydrolase 109 subfamily. Requires NAD(+) as cofactor.

Its subcellular location is the cell membrane. In terms of biological role, glycosidase. The sequence is that of Glycosyl hydrolase family 109 protein 4 from Phocaeicola vulgatus (strain ATCC 8482 / DSM 1447 / JCM 5826 / CCUG 4940 / NBRC 14291 / NCTC 11154) (Bacteroides vulgatus).